The chain runs to 184 residues: Putative pre-16S rRNA nuclease (184 aa).

The tract at residues 1 to 23 (MFSSQHRLLYQPSGPDLSKNLDP) is disordered.

It belongs to the YqgF nuclease family.

It is found in the cytoplasm. Functionally, could be a nuclease involved in processing of the 5'-end of pre-16S rRNA. The sequence is that of Putative pre-16S rRNA nuclease from Mycobacterium leprae (strain Br4923).